Consider the following 1316-residue polypeptide: DNA-directed RNA polymerase subunit beta' (1316 aa).

Zn(2+)-binding residues include cysteine 60, cysteine 62, cysteine 75, and cysteine 78. Residues aspartate 535, aspartate 537, and aspartate 539 each contribute to the Mg(2+) site. Zn(2+) is bound by residues cysteine 891, cysteine 968, cysteine 975, and cysteine 978.

It belongs to the RNA polymerase beta' chain family. In terms of assembly, the RNAP catalytic core consists of 2 alpha, 1 beta, 1 beta' and 1 omega subunit. When a sigma factor is associated with the core the holoenzyme is formed, which can initiate transcription. Mg(2+) serves as cofactor. Zn(2+) is required as a cofactor.

The enzyme catalyses RNA(n) + a ribonucleoside 5'-triphosphate = RNA(n+1) + diphosphate. Its function is as follows. DNA-dependent RNA polymerase catalyzes the transcription of DNA into RNA using the four ribonucleoside triphosphates as substrates. The protein is DNA-directed RNA polymerase subunit beta' of Mycobacterium marinum (strain ATCC BAA-535 / M).